A 343-amino-acid polypeptide reads, in one-letter code: 4-hydroxy-2-oxovalerate aldolase (343 aa).

The region spanning Pro4–Met254 is the Pyruvate carboxyltransferase domain. Arg12–Asp13 serves as a coordination point for substrate. Asp13 lines the Mn(2+) pocket. The active-site Proton acceptor is the His16. The substrate site is built by Ser166 and His193. Residues His193 and His195 each coordinate Mn(2+). Substrate is bound at residue Tyr284.

The protein belongs to the 4-hydroxy-2-oxovalerate aldolase family.

The catalysed reaction is (S)-4-hydroxy-2-oxopentanoate = acetaldehyde + pyruvate. The chain is 4-hydroxy-2-oxovalerate aldolase from Chloroflexus aggregans (strain MD-66 / DSM 9485).